Consider the following 720-residue polypeptide: Protein O-mannosyl-transferase 1 (720 aa).

A run of 8 helical transmembrane segments spans residues 7–27, 67–87, 105–125, 127–147, 150–170, 178–198, 201–221, and 239–259; these read PVSV…LALF, FGHM…NFVW, LIPA…VVEL, YSHF…SLIV, RFML…LSYL, SFFK…GIGV, MGMF…WQLI, and FLAL…IHLT. 3 MIR domains span residues 291 to 354, 365 to 422, and 426 to 486; these read PLDV…IKDP, PKPV…VDIV, and SEKE…VEEH. Helical transmembrane passes span 570–590, 609–629, 633–653, and 670–690; these read IVTW…FLTY, LVLA…PFFL, TLFL…IPIV, and AFGG…HSLS.

Belongs to the glycosyltransferase 39 family. Widely expressed. Has particularly strong expression in testis, ovary, brain, liver and heart.

The protein localises to the endoplasmic reticulum membrane. It carries out the reaction a di-trans,poly-cis-dolichyl beta-D-mannosyl phosphate + L-seryl-[protein] = 3-O-(alpha-D-mannosyl)-L-seryl-[protein] + a di-trans,poly-cis-dolichyl phosphate + H(+). The catalysed reaction is a di-trans,poly-cis-dolichyl beta-D-mannosyl phosphate + L-threonyl-[protein] = 3-O-(alpha-D-mannosyl)-L-threonyl-[protein] + a di-trans,poly-cis-dolichyl phosphate + H(+). It functions in the pathway protein modification; protein glycosylation. Functionally, transfers mannosyl residues to the hydroxyl group of serine or threonine residues. Coexpression of both POMT1 and POMT2 is necessary for enzyme activity, expression of either POMT1 or POMT2 alone is insufficient. This Danio rerio (Zebrafish) protein is Protein O-mannosyl-transferase 1.